Here is a 436-residue protein sequence, read N- to C-terminus: MRKSVVAIVGRPNVGKSTIFNRLVGERISIVEDIPGVTRDRIYANAEWLNHTFNIIDTGGIELGDEPLLVQMRQQAEIAIDEADVIVFLLNGKEGITSADDEVAKLLFKSNKPVVVGVNKMDNPQMHETIYEYYSLGFGQPFPISGTHGLGLGDLLDEVVGHFPNESEEEKDEDTIYFSLIGRPNVGKSSLVNALLNEDRVIVSEIEGTTRDAIDTKLHRDDQDFVIIDTAGMRKRGKVYESTEKYSVLRALRAIERSDVVLVLIDAETGIREQDKRIAGYAHDAGRAIVIVVNKWDTVDSNEKAMKEFEKNIRAHFQYLDYAPVVFLSAKTKKRMHTLVPAIKLASESHTKRIPTNVLNDVIMDAIAMNPTPTLKGKRLKVLYATQVAVQPPSFVVFVNDPELMHFSYERFLENKIRDAFGFVGTPIKLFARRRQ.

2 consecutive EngA-type G domains span residues 4–167 (SVVA…PNES) and 176–351 (IYFS…ESHT). Residues 10–17 (GRPNVGKS), 57–61 (DTGGI), 119–122 (NKMD), 182–189 (GRPNVGKS), 229–233 (DTAGM), and 294–297 (NKWD) contribute to the GTP site. The KH-like domain occupies 352 to 436 (KRIPTNVLND…PIKLFARRRQ (85 aa)).

The protein belongs to the TRAFAC class TrmE-Era-EngA-EngB-Septin-like GTPase superfamily. EngA (Der) GTPase family. Associates with the 50S ribosomal subunit.

In terms of biological role, GTPase that plays an essential role in the late steps of ribosome biogenesis. The polypeptide is GTPase Der (Oceanobacillus iheyensis (strain DSM 14371 / CIP 107618 / JCM 11309 / KCTC 3954 / HTE831)).